The chain runs to 139 residues: Protein archease (139 aa).

Asp12, Asp138, and Ile139 together coordinate Ca(2+).

This sequence belongs to the archease family.

In terms of biological role, activates the tRNA-splicing ligase complex by facilitating the enzymatic turnover of catalytic subunit RtcB. Acts by promoting the guanylylation of RtcB, a key intermediate step in tRNA ligation. Can also alter the NTP specificity of RtcB such that ATP, dGTP or ITP is used efficiently. This chain is Protein archease, found in Saccharolobus islandicus (strain Y.G.57.14 / Yellowstone #1) (Sulfolobus islandicus).